Reading from the N-terminus, the 398-residue chain is Na(+)/H(+) antiporter NhaA (398 aa).

A run of 11 helical transmembrane segments spans residues 21-41, 66-86, 101-121, 132-152, 161-181, 184-204, 216-236, 274-294, 305-325, 343-363, and 374-394; these read LGGYVLMIAAVLALIVANSPL, VLHWINDGLMAVFFLLVGLEI, IVLPGVAAAGGMLMPALVYLL, GWAIPAATDIAFALGILALLG, IFLTALAILDDLGAIAIIAVF, AELNTSALAAAGGLLAALCVL, LLVGALLWYFVLKSGVHATLA, LLIVPVFGFANAGVSFDGMGI, IALGLFLGKQLGVFGFAWLAI, GVALLCGIGFTMSLFIGALAF, and IGVLTGSLVSAVLGYALLRVL.

Belongs to the NhaA Na(+)/H(+) (TC 2.A.33) antiporter family.

The protein localises to the cell inner membrane. The enzyme catalyses Na(+)(in) + 2 H(+)(out) = Na(+)(out) + 2 H(+)(in). In terms of biological role, na(+)/H(+) antiporter that extrudes sodium in exchange for external protons. In Bordetella bronchiseptica (strain ATCC BAA-588 / NCTC 13252 / RB50) (Alcaligenes bronchisepticus), this protein is Na(+)/H(+) antiporter NhaA.